Here is a 208-residue protein sequence, read N- to C-terminus: N-(5'-phosphoribosyl)anthranilate isomerase (208 aa).

It belongs to the TrpF family.

It carries out the reaction N-(5-phospho-beta-D-ribosyl)anthranilate = 1-(2-carboxyphenylamino)-1-deoxy-D-ribulose 5-phosphate. It participates in amino-acid biosynthesis; L-tryptophan biosynthesis; L-tryptophan from chorismate: step 3/5. The protein is N-(5'-phosphoribosyl)anthranilate isomerase of Desulforamulus reducens (strain ATCC BAA-1160 / DSM 100696 / MI-1) (Desulfotomaculum reducens).